A 270-amino-acid polypeptide reads, in one-letter code: 4-hydroxy-tetrahydrodipicolinate reductase (270 aa).

NAD(+) contacts are provided by residues 9-14 (GAGGRM) and E35. R36 is an NADP(+) binding site. NAD(+) contacts are provided by residues 99-101 (GTT) and 123-126 (ASNF). The Proton donor/acceptor role is filled by H156. H157 serves as a coordination point for (S)-2,3,4,5-tetrahydrodipicolinate. K160 acts as the Proton donor in catalysis. Residue 166-167 (GT) coordinates (S)-2,3,4,5-tetrahydrodipicolinate.

It belongs to the DapB family.

Its subcellular location is the cytoplasm. The catalysed reaction is (S)-2,3,4,5-tetrahydrodipicolinate + NAD(+) + H2O = (2S,4S)-4-hydroxy-2,3,4,5-tetrahydrodipicolinate + NADH + H(+). It catalyses the reaction (S)-2,3,4,5-tetrahydrodipicolinate + NADP(+) + H2O = (2S,4S)-4-hydroxy-2,3,4,5-tetrahydrodipicolinate + NADPH + H(+). It participates in amino-acid biosynthesis; L-lysine biosynthesis via DAP pathway; (S)-tetrahydrodipicolinate from L-aspartate: step 4/4. Functionally, catalyzes the conversion of 4-hydroxy-tetrahydrodipicolinate (HTPA) to tetrahydrodipicolinate. The sequence is that of 4-hydroxy-tetrahydrodipicolinate reductase from Pasteurella multocida (strain Pm70).